Here is a 146-residue protein sequence, read N- to C-terminus: Ribonuclease H (146 aa).

The 143-residue stretch at 1–143 (MKEIIIYTDG…CDQLARNAIK (143 aa)) folds into the RNase H type-1 domain. Mg(2+) is bound by residues aspartate 9, glutamate 47, aspartate 70, and aspartate 135.

Belongs to the RNase H family. In terms of assembly, monomer. Requires Mg(2+) as cofactor.

It is found in the cytoplasm. It catalyses the reaction Endonucleolytic cleavage to 5'-phosphomonoester.. Functionally, endonuclease that specifically degrades the RNA of RNA-DNA hybrids. The polypeptide is Ribonuclease H (Syntrophomonas wolfei subsp. wolfei (strain DSM 2245B / Goettingen)).